The sequence spans 356 residues: tRNA-specific 2-thiouridylase MnmA (356 aa).

Residues 6-13 and Leu-32 each bind ATP; that span reads AMSGGVDS. Cys-101 acts as the Nucleophile in catalysis. A disulfide bridge connects residues Cys-101 and Cys-193. Position 125 (Gly-125) interacts with ATP. The tract at residues 143–145 is interaction with tRNA; that stretch reads KDQ. The Cysteine persulfide intermediate role is filled by Cys-193.

It belongs to the MnmA/TRMU family.

The protein localises to the cytoplasm. The catalysed reaction is S-sulfanyl-L-cysteinyl-[protein] + uridine(34) in tRNA + AH2 + ATP = 2-thiouridine(34) in tRNA + L-cysteinyl-[protein] + A + AMP + diphosphate + H(+). Functionally, catalyzes the 2-thiolation of uridine at the wobble position (U34) of tRNA, leading to the formation of s(2)U34. The sequence is that of tRNA-specific 2-thiouridylase MnmA from Mycolicibacterium smegmatis (strain ATCC 700084 / mc(2)155) (Mycobacterium smegmatis).